A 180-amino-acid polypeptide reads, in one-letter code: MAVTPWQTAFLQLLPSGLAWNKSPDSKLSALAQAISDVIATAADDARQMLRERFPSTSRWYLGEWESFLGLPDCTSENGTLSERQRAAANKMRMTGNLSRRFYEWLAAQYGFTVRLTDSTEGQWVTQVNIYGIKNYRNATVLDNVLTPLRVYESGALECLLEKYKPAHQIYKFVYHDGDN.

In terms of assembly, part of a complex composed of three DNA circularization protein N, three baseplate hub protein gp44 and three sub-complex wedge (made of two copies of each baseplate protein gp46, gp47 and gp48) that forms the baseplate.

It localises to the virion. Its subcellular location is the host cytoplasm. In terms of biological role, component of the baseplate. The protein is Baseplate protein gp48 of Enterobacteriaceae (Bacteriophage Mu).